Consider the following 125-residue polypeptide: Small ribosomal subunit protein uS13 (125 aa).

The interval 94–125 is disordered; that stretch reads SLPVRGQRTRTNARTRKGKRKTVAGKKKAVKK.

Belongs to the universal ribosomal protein uS13 family. As to quaternary structure, part of the 30S ribosomal subunit. Forms a loose heterodimer with protein S19. Forms two bridges to the 50S subunit in the 70S ribosome.

In terms of biological role, located at the top of the head of the 30S subunit, it contacts several helices of the 16S rRNA. In the 70S ribosome it contacts the 23S rRNA (bridge B1a) and protein L5 of the 50S subunit (bridge B1b), connecting the 2 subunits; these bridges are implicated in subunit movement. Contacts the tRNAs in the A and P-sites. The chain is Small ribosomal subunit protein uS13 from Chlorobium chlorochromatii (strain CaD3).